A 353-amino-acid polypeptide reads, in one-letter code: Cyclic GMP-AMP synthase-like receptor (353 aa).

ATP contacts are provided by residues serine 60 and 72-74; that span reads EYD. Positions 72, 74, and 183 each coordinate Mg(2+). Aspartate 183 serves as a coordination point for GTP. Position 245 (lysine 245) interacts with ATP. Mn(2+)-binding residues include leucine 269 and glutamate 270.

This sequence belongs to the mab-21 family. The cofactor is Mg(2+). Mn(2+) serves as cofactor.

It carries out the reaction GTP + ATP = 2',3'-cGAMP + 2 diphosphate. It catalyses the reaction GTP + ATP = pppGp(2'-5')A + diphosphate. The enzyme catalyses pppGp(2'-5')A = 2',3'-cGAMP + diphosphate. In terms of biological role, nucleotidyltransferase that catalyzes the formation of cyclic GMP-AMP (2',3'-cGAMP) from ATP and GTP and plays a key role in innate immunity. Acts as a key sensor of double-stranded RNA (dsRNA), the presence of dsRNA in the cytoplasm being a danger signal that triggers the immune responses. Directly binds dsRNA, activating the nucleotidyltransferase activity, leading to synthesis of 2',3'-cGAMP, a second messenger that binds to and activates Sting, thereby triggering the immune response via activation of the NF-kappa-B transcription factor. This chain is Cyclic GMP-AMP synthase-like receptor, found in Nicrophorus vespilloides (Boreal carrion beetle).